Here is a 743-residue protein sequence, read N- to C-terminus: Putative metallophosphoesterase At3g03305 (743 aa).

The N-terminal stretch at 1-40 is a signal peptide; sequence MESIGDDDELRSKTVSLPRRISFTILLLLLLISLSTRVSG. Residues aspartate 66, histidine 68, and aspartate 101 each coordinate a divalent metal cation. 5 helical membrane passes run 514–534, 565–585, 623–643, 687–704, and 716–736; these read ILWP…CIII, MPVV…FPWF, VMVV…LVVC, LFRK…WKHF, and MNVV…LYVI.

Belongs to the metallophosphoesterase superfamily. Requires a divalent metal cation as cofactor.

Its subcellular location is the membrane. The sequence is that of Putative metallophosphoesterase At3g03305 from Arabidopsis thaliana (Mouse-ear cress).